The sequence spans 220 residues: DNA-directed RNA polymerase subunit alpha (220 aa).

It belongs to the RNA polymerase alpha chain family. In plastids the minimal PEP RNA polymerase catalytic core is composed of four subunits: alpha, beta, beta', and beta''. When a (nuclear-encoded) sigma factor is associated with the core the holoenzyme is formed, which can initiate transcription.

It localises to the plastid. The catalysed reaction is RNA(n) + a ribonucleoside 5'-triphosphate = RNA(n+1) + diphosphate. Its function is as follows. DNA-dependent RNA polymerase catalyzes the transcription of DNA into RNA using the four ribonucleoside triphosphates as substrates. In Euglena longa (Euglenophycean alga), this protein is DNA-directed RNA polymerase subunit alpha (rpoA).